Reading from the N-terminus, the 333-residue chain is Putative ketol-acid reductoisomerase 2 (333 aa).

The KARI N-terminal Rossmann domain occupies 1–182 (MDKTVLDANL…AIPGGIAVIS (182 aa)). Positions 183 to 329 (SFEEEALLDL…KELYKLLGRK (147 aa)) constitute a KARI C-terminal knotted domain.

Belongs to the ketol-acid reductoisomerase family.

The enzyme catalyses (2R)-2,3-dihydroxy-3-methylbutanoate + NADP(+) = (2S)-2-acetolactate + NADPH + H(+). The catalysed reaction is (2R,3R)-2,3-dihydroxy-3-methylpentanoate + NADP(+) = (S)-2-ethyl-2-hydroxy-3-oxobutanoate + NADPH + H(+). It participates in amino-acid biosynthesis; L-isoleucine biosynthesis; L-isoleucine from 2-oxobutanoate: step 2/4. It functions in the pathway amino-acid biosynthesis; L-valine biosynthesis; L-valine from pyruvate: step 2/4. The sequence is that of Putative ketol-acid reductoisomerase 2 (ilvC2) from Saccharolobus solfataricus (strain ATCC 35092 / DSM 1617 / JCM 11322 / P2) (Sulfolobus solfataricus).